The sequence spans 1591 residues: Rho guanine nucleotide exchange factor TIAM1 (1591 aa).

The interval Met-1–Gln-78 is disordered. A lipid anchor (N-myristoyl glycine) is attached at Gly-2. Basic and acidic residues predominate over residues Gln-7–Ala-19. Residues Ser-20–His-49 show a composition bias toward basic residues. A compositionally biased stretch (low complexity) spans Glu-53–Ser-67. Position 231 is a phosphoserine (Ser-231). 2 disordered regions span residues Ser-298–Ala-379 and Met-393–Gln-422. 2 stretches are compositionally biased toward polar residues: residues Gly-300 to Gln-313 and Thr-340 to Thr-361. Phosphoserine occurs at positions 356 and 358. Residues Gly-367–Asp-377 are compositionally biased toward low complexity. The segment covering Gln-412–Gln-422 has biased composition (polar residues). The PH 1 domain occupies Val-434–Ala-549. Ser-695 carries the phosphoserine modification. One can recognise an RBD domain in the interval Thr-765–Leu-832. Tyr-829 is subject to Phosphotyrosine; by NTRK2. Positions Ser-845 to Ser-908 constitute a PDZ domain. Residues Ser-939–Gln-1034 form a disordered region. The segment covering Leu-958–Glu-975 has biased composition (polar residues). Over residues Ala-977–Asp-990 the composition is skewed to acidic residues. A compositionally biased stretch (low complexity) spans Pro-1014–Ser-1024. A compositionally biased stretch (polar residues) spans Thr-1025–Gln-1034. Residues Lys-1040–Met-1234 enclose the DH domain. A PH 2 domain is found at Asp-1261–Lys-1397. Position 1323 is a phosphotyrosine (Tyr-1323). Glycyl lysine isopeptide (Lys-Gly) (interchain with G-Cter in ubiquitin) cross-links involve residues Lys-1404 and Lys-1420. A disordered region spans residues Thr-1456–Arg-1482. The residue at position 1519 (Ser-1519) is a Phosphoserine.

This sequence belongs to the TIAM family. In terms of assembly, component of the Par polarity complex, composed of at least phosphorylated PRKCZ, PARD3 and TIAM1. Interacts with NTRK2; mediates the activation of RAC1 by BDNF. Interacts with MAPK8IP2 and CD44. Interacts with BAIAP2. Interacts with EPHA8; regulates clathrin-mediated endocytosis of EPHA8. Interacts with PARD3. Interacts (via PDZ domain) with CNTNAP4, SDC1 and SDC3 (via C-terminus). In terms of processing, ubiquitinated. Undergoes 'Lys-48' ubiquitination at Lys-1404 and Lys-1420 by a CUL3(KBTBD6/7) E3 ubiquitin ligase complex composed of CUL3, RBX1, KBTBD6 and KBTBD7. 'Lys-48' ubiquitination at Lys-1404 and Lys-1420 triggers proteasomal degradation. Ubiquitination at Lys-1404 and Lys-1420 by CUL3(KBTBD6/7) also requires the membrane-associated protein GABARAP and may therefore be spatially restricted within the cell. As to expression, found in virtually all analyzed tumor cell lines including B- and T-lymphomas, neuroblastomas, melanomas and carcinomas.

Its subcellular location is the cell junction. It is found in the cell membrane. Guanyl-nucleotide exchange factor that activates RHO-like proteins and connects extracellular signals to cytoskeletal activities. Activates RAC1, CDC42, and to a lesser extent RHOA and their downstream signaling to regulate processes like cell adhesion and cell migration. The sequence is that of Rho guanine nucleotide exchange factor TIAM1 from Homo sapiens (Human).